A 142-amino-acid chain; its full sequence is MFQGASALTLDAKGRMSVPARYREALQGQAEGRVTVTKHPDGCLLLFPRPEWEVFRAKIAALPMDAHWWRRIFLGNAMDVDLDSAGRILVSPELRMAAGLEKEVMLLGMGSHFELWDSQTYNAKEQAAMAQGMPDALKNFTF.

SpoVT-AbrB domains lie at 5-51 (ASAL…PRPE) and 77-120 (AMDV…DSQT).

Belongs to the MraZ family. As to quaternary structure, forms oligomers.

Its subcellular location is the cytoplasm. The protein resides in the nucleoid. The protein is Transcriptional regulator MraZ of Burkholderia cenocepacia (strain ATCC BAA-245 / DSM 16553 / LMG 16656 / NCTC 13227 / J2315 / CF5610) (Burkholderia cepacia (strain J2315)).